A 181-amino-acid chain; its full sequence is Peptide methionine sulfoxide reductase MsrA (181 aa).

The active site involves Cys-14.

The protein belongs to the MsrA Met sulfoxide reductase family.

The catalysed reaction is L-methionyl-[protein] + [thioredoxin]-disulfide + H2O = L-methionyl-(S)-S-oxide-[protein] + [thioredoxin]-dithiol. It catalyses the reaction [thioredoxin]-disulfide + L-methionine + H2O = L-methionine (S)-S-oxide + [thioredoxin]-dithiol. Has an important function as a repair enzyme for proteins that have been inactivated by oxidation. Catalyzes the reversible oxidation-reduction of methionine sulfoxide in proteins to methionine. The protein is Peptide methionine sulfoxide reductase MsrA of Bacillus licheniformis (strain ATCC 14580 / DSM 13 / JCM 2505 / CCUG 7422 / NBRC 12200 / NCIMB 9375 / NCTC 10341 / NRRL NRS-1264 / Gibson 46).